Reading from the N-terminus, the 398-residue chain is Lysophosphatidylserine lipase ABHD12 (398 aa).

Residues 1–16 are compositionally biased toward basic and acidic residues; sequence MRKRTEPVALEHERRT. The segment at 1 to 24 is disordered; sequence MRKRTEPVALEHERRTASGSPSAG. Topologically, residues 1–74 are cytoplasmic; it reads MRKRTEPVAL…RKGLCFRLRK (74 aa). The chain crosses the membrane as a helical span at residues 75 to 95; the sequence is ILFFVLGLYVAIPFLIKLCPG. Topologically, residues 96-398 are extracellular; the sequence is IQAKLIFLNF…LGKSEPGRQH (303 aa). Asn-123 carries an N-linked (GlcNAc...) asparagine glycan. Catalysis depends on Ser-246, which acts as the Nucleophile. Active-site charge relay system residues include Asp-333 and His-372.

The protein belongs to the serine esterase family.

The protein localises to the endoplasmic reticulum membrane. It catalyses the reaction 1-(9Z-octadecenoyl)-sn-glycero-3-phospho-L-serine + H2O = sn-glycero-3-phospho-L-serine + (9Z)-octadecenoate + H(+). It carries out the reaction 1-(9Z-octadecenoyl)-sn-glycero-3-phospho-(1'-sn-glycerol) + H2O = sn-glycero-3-phospho-(1'-sn-glycerol) + (9Z)-octadecenoate + H(+). The catalysed reaction is 1-(9Z-octadecenoyl)-sn-glycero-3-phospho-(1D-myo-inositol) + H2O = sn-glycero-3-phospho-1D-myo-inositol + (9Z)-octadecenoate + H(+). The enzyme catalyses 1-(9Z-octadecenoyl)-sn-glycero-3-phosphoethanolamine + H2O = sn-glycero-3-phosphoethanolamine + (9Z)-octadecenoate + H(+). It catalyses the reaction 1-(9Z-octadecenoyl)-sn-glycero-3-phosphocholine + H2O = 1-(9Z-octadecenoyl)-sn-glycerol + phosphocholine + H(+). It carries out the reaction 2-(9Z-octadecenoyl)-glycerol + H2O = glycerol + (9Z)-octadecenoate + H(+). The catalysed reaction is 1-hexadecanoyl-sn-glycero-3-phospho-L-serine + H2O = sn-glycero-3-phospho-L-serine + hexadecanoate + H(+). The enzyme catalyses 2-(5Z,8Z,11Z,14Z-eicosatetraenoyl)-glycerol + H2O = glycerol + (5Z,8Z,11Z,14Z)-eicosatetraenoate + H(+). It catalyses the reaction Hydrolyzes glycerol monoesters of long-chain fatty acids.. It carries out the reaction 1-decanoylglycerol + H2O = decanoate + glycerol + H(+). The catalysed reaction is 1-dodecanoylglycerol + H2O = dodecanoate + glycerol + H(+). The enzyme catalyses 1-tetradecanoylglycerol + H2O = tetradecanoate + glycerol + H(+). It catalyses the reaction 2-hexadecanoylglycerol + H2O = glycerol + hexadecanoate + H(+). It carries out the reaction 1-(9Z-octadecenoyl)-glycerol + H2O = glycerol + (9Z)-octadecenoate + H(+). The catalysed reaction is 2-(9Z,12Z-octadecadienoyl)-glycerol + H2O = (9Z,12Z)-octadecadienoate + glycerol + H(+). The enzyme catalyses 1-(5Z,8Z,11Z,14Z-eicosatetraenoyl)-glycerol + H2O = glycerol + (5Z,8Z,11Z,14Z)-eicosatetraenoate + H(+). It catalyses the reaction 1-(9Z,12Z-octadecadienoyl)-glycerol + H2O = (9Z,12Z)-octadecadienoate + glycerol + H(+). It carries out the reaction 1-hexadecanoylglycerol + H2O = glycerol + hexadecanoate + H(+). The catalysed reaction is 1-octadecanoylglycerol + H2O = octadecanoate + glycerol + H(+). The enzyme catalyses 1-octadecanoyl-2-(9,10-epoxyoctadecanoyl)-sn-glycero-3-phospho-L-serine + H2O = 9,10-epoxyoctadecanoate + 1-octadecanoyl-sn-glycero-3-phosphoserine + H(+). It catalyses the reaction 1-octadecanoyl-2-(10-hydroxyoctadecanoyl)-sn-glycero-3-phospho-L-serine + H2O = 1-octadecanoyl-sn-glycero-3-phosphoserine + 10-hydroxyoctadecanoate + H(+). It carries out the reaction 1-hexadecanoyl-2-(10-hydroxyoctadecanoyl)-sn-glycero-3-phospho-L-serine + H2O = 10-hydroxyoctadecanoate + 1-hexadecanoyl-sn-glycero-3-phospho-L-serine + H(+). Functionally, lysophosphatidylserine (LPS) lipase that mediates the hydrolysis of lysophosphatidylserine, a class of signaling lipids that regulates immunological and neurological processes. Represents a major lysophosphatidylserine lipase in the brain, thereby playing a key role in the central nervous system. Also able to hydrolyze oxidized phosphatidylserine; oxidized phosphatidylserine is produced in response to severe inflammatory stress and constitutes a proapoptotic 'eat me' signal. Also has monoacylglycerol (MAG) lipase activity: hydrolyzes 2-arachidonoylglycerol (2-AG), thereby acting as a regulator of endocannabinoid signaling pathways. Has a strong preference for very-long-chain lipid substrates; substrate specificity is likely due to improved catalysis and not improved substrate binding. The polypeptide is Lysophosphatidylserine lipase ABHD12 (Bos taurus (Bovine)).